A 951-amino-acid polypeptide reads, in one-letter code: Serrate RNA effector molecule homolog (951 aa).

Disordered stretches follow at residues 1 to 108 (MADS…PRYG), 283 to 515 (FDRK…KVNP), 644 to 664 (PLSK…GSGS), and 864 to 893 (DPKR…GYRP). Basic and acidic residues-rich tracts occupy residues 8–33 (YDRK…ERRP) and 40–49 (GRDEWSERNP). Residues 51–60 (RGGGAGGGGA) show a composition bias toward gly residues. Y79 is subject to Phosphotyrosine. A Phosphoserine modification is found at S81. Residues 92–103 (MRSDWGDGDGRP) are compositionally biased toward basic and acidic residues. T299 carries the phosphothreonine modification. 3 positions are modified to phosphoserine: S302, S328, and S354. Positions 328 to 340 (SDDENWDDAEVED) are enriched in acidic residues. Over residues 341–362 (APPKKPEEEEPKESEPIPEIKQ) the composition is skewed to basic and acidic residues. A compositionally biased stretch (basic residues) spans 363 to 378 (KQKKEKKKKIKKRKRN). Low complexity predominate over residues 387-396 (SSESESSSSS). Residues 405 to 434 (EKLKAKYDVEDGLRAEQKAEAEKDQAEAAK) show a composition bias toward basic and acidic residues. S441 carries the phosphoserine modification. Positions 442 to 487 (PKEEISPEKSAADPEVEGEAKEDGKQAEKSPKSDDEKKQENGDAAK) are enriched in basic and acidic residues. The segment covering 649 to 664 (SPASDSEATAANGSGS) has biased composition (polar residues).

It belongs to the ARS2 family. Interacts with cbp20, Dcr-2 and pasha.

It localises to the nucleus. Acts as a mediator between the cap-binding complex (CBC) and RNA-mediated gene silencing (RNAi). Involved in innate immunity via the short interfering RNAs (siRNAs) processing machinery by restricting the viral RNA production. Also involved microRNA (miRNA)-mediated silencing by contributing to the stability and delivery of primary miRNA transcripts to the primary miRNA processing complex containing drosha and pasha. In Drosophila persimilis (Fruit fly), this protein is Serrate RNA effector molecule homolog (Ars2).